Here is a 100-residue protein sequence, read N- to C-terminus: Large ribosomal subunit protein uL23 (100 aa).

The protein belongs to the universal ribosomal protein uL23 family. As to quaternary structure, part of the 50S ribosomal subunit. Contacts protein L29, and trigger factor when it is bound to the ribosome.

One of the early assembly proteins it binds 23S rRNA. One of the proteins that surrounds the polypeptide exit tunnel on the outside of the ribosome. Forms the main docking site for trigger factor binding to the ribosome. This chain is Large ribosomal subunit protein uL23, found in Xylella fastidiosa (strain 9a5c).